We begin with the raw amino-acid sequence, 367 residues long: Forkhead box protein I1-B (367 aa).

Disordered regions lie at residues M1–H21 and D213–V274. The segment at residues R128–K222 is a DNA-binding region (fork-head). Over residues A233–E246 the composition is skewed to basic and acidic residues. The segment covering T252–V274 has biased composition (polar residues).

In terms of tissue distribution, initially localized to the animal hemisphere (the presumptive ectoderm) of early-mid blastula embryos. Becomes restricted to head placodes, excluding the otic placodes, by the tailbud stages.

The protein resides in the nucleus. Transcription factor. Essential for ventral specification of the early cephalic (head) ectoderm during gastrulation, playing a role in the 'non-neural' versus 'neural' cell fate choice. Binds to DNA via the target sequence 5'-[AG]TAAA[CT]A-3', with 5'-ATAAACA-3' being the preferred binding site. This chain is Forkhead box protein I1-B (foxi1-b), found in Xenopus laevis (African clawed frog).